A 172-amino-acid chain; its full sequence is Disulfide bond formation protein B (172 aa).

The Cytoplasmic segment spans residues 1–11 (MNPFRWSFRAQ). Residues 12 to 28 (FLLGFLACAGLLAYAIY) form a helical membrane-spanning segment. Residues 29 to 46 (VQLHLGLEPCPLCIFQRI) lie on the Periplasmic side of the membrane. Cysteine 38 and cysteine 41 are joined by a disulfide. Residues 47–63 (AFAALAMFFLLGALHGP) traverse the membrane as a helical segment. Residues 64–70 (RAAAGRK) are Cytoplasmic-facing. The chain crosses the membrane as a helical span at residues 71-88 (VYGVLSFIAAGVGMGIAA). At 89–145 (RHVWVQIRPKDMMSSCGPPLSFLSETMGPFEVFRTVLTGTGDCGNIDWRFLGLSMPM) the chain is on the periplasmic side. Cysteine 104 and cysteine 131 form a disulfide bridge. A helical membrane pass occupies residues 146–164 (WSMVWFVGLALWALYAGFK). The Cytoplasmic portion of the chain corresponds to 165 to 172 (ARRSSVHH).

Belongs to the DsbB family.

Its subcellular location is the cell inner membrane. Required for disulfide bond formation in some periplasmic proteins. Acts by oxidizing the DsbA protein. The chain is Disulfide bond formation protein B from Xanthomonas euvesicatoria pv. vesicatoria (strain 85-10) (Xanthomonas campestris pv. vesicatoria).